Here is a 149-residue protein sequence, read N- to C-terminus: Large ribosomal subunit protein uL16c (149 aa).

The protein belongs to the universal ribosomal protein uL16 family. Part of the 50S ribosomal subunit.

The protein resides in the plastid. Its subcellular location is the organellar chromatophore. In Paulinella chromatophora, this protein is Large ribosomal subunit protein uL16c (rpl16).